The chain runs to 298 residues: ADP/ATP translocase 2 (298 aa).

N-acetylmethionine is present on Met-1. Topologically, residues 1-7 (MTDAAVS) are mitochondrial intermembrane. Thr-2 bears the N-acetylthreonine; in ADP/ATP translocase 2, N-terminally processed mark. The stretch at 6–98 (VSFAKDFLAG…FAFKDKYKQI (93 aa)) is one Solcar 1 repeat. Residue Ser-7 is modified to Phosphoserine. A helical membrane pass occupies residues 8 to 37 (FAKDFLAGGVAAAISKTAVAPIERVKLLLQ). Residue Lys-23 is modified to N6-malonyllysine. Over 38–74 (VQHASKQITADKQYKGIIDCVVRIPKEQGVLSFWRGN) the chain is Mitochondrial matrix. Lys-43 carries the N6-succinyllysine modification. Lys-52 is subject to N6,N6,N6-trimethyllysine; alternate. Lys-52 carries the N6,N6-dimethyllysine; alternate modification. The residue at position 52 (Lys-52) is an N6-methyllysine; alternate. Residues 75–99 (LANVIRYFPTQALNFAFKDKYKQIF) traverse the membrane as a helical segment. ADP-binding residues include Arg-80 and Lys-92. N6-malonyllysine occurs at positions 92 and 96. Over 100–109 (LGGVDKRTQF) the chain is Mitochondrial intermembrane. Lys-105 bears the N6-acetyllysine; alternate mark. Lys-105 bears the N6-succinyllysine; alternate mark. A helical transmembrane segment spans residues 110-130 (WRYFAGNLASGGAAGATSLCF). Solcar repeat units lie at residues 111–201 (RYFA…AKGM) and 212–297 (ISWM…IKKF). At 131–178 (VYPLDFARTRLAADVGKAGAEREFRGLGDCLVKIYKSDGIRGLYQGFN) the chain is on the mitochondrial matrix side. Lys-147 is subject to N6-methyllysine; alternate. Lys-147 is subject to N6-acetyllysine; alternate. Residue Lys-147 is modified to N6-succinyllysine; alternate. Residue Lys-147 is modified to N6-malonyllysine; alternate. N6-acetyllysine occurs at positions 163 and 166. The chain crosses the membrane as a helical span at residues 179 to 199 (VSVQGIIIYRAAYFGIYDTAK). The Mitochondrial intermembrane portion of the chain corresponds to 200–210 (GMLPDPKNTHI). The helical transmembrane segment at 211 to 231 (FISWMIAQSVTAVAGLTSYPF) threads the bilayer. Residues 232–273 (DTVRRRMMMQSGRKGTDIMYTGTLDCWRKIARDEGAKAFFKG) are Mitochondrial matrix-facing. Arg-235 is a binding site for ADP. The segment at 235–240 (RRRMMM) is important for transport activity. A Nucleotide carrier signature motif motif is present at residues 235–240 (RRRMMM). Residue Lys-268 is modified to N6-acetyllysine; alternate. Lys-268 carries the N6-succinyllysine; alternate modification. Residues 274-291 (AWSNVLRGMGGAFVLVLY) traverse the membrane as a helical segment. Residues 292 to 298 (DEIKKFT) lie on the Mitochondrial intermembrane side of the membrane.

It belongs to the mitochondrial carrier (TC 2.A.29) family. Monomer. Component of the MMXD complex, which includes CIAO1, ERCC2, CIAO2B, MMS19 and SLC25A5/ANT2. Interacts with AK4. Interacts with TIMM44; leading to inhibit the presequence translocase TIMM23, thereby promoting stabilization of PINK1. Trimethylated by ANTKMT at Lys-52.

The protein resides in the mitochondrion inner membrane. The protein localises to the membrane. It carries out the reaction ADP(in) + ATP(out) = ADP(out) + ATP(in). It catalyses the reaction H(+)(in) = H(+)(out). Its activity is regulated as follows. The matrix-open state (m-state) is inhibited by the membrane-permeable bongkrekic acid (BKA). The cytoplasmic-open state (c-state) is inhibited by the membrane-impermeable toxic inhibitor carboxyatractyloside (CATR). Proton transporter activity is inhibited by ADP:ATP antiporter activity. Functionally, ADP:ATP antiporter that mediates import of ADP into the mitochondrial matrix for ATP synthesis, and export of ATP out to fuel the cell. Cycles between the cytoplasmic-open state (c-state) and the matrix-open state (m-state): operates by the alternating access mechanism with a single substrate-binding site intermittently exposed to either the cytosolic (c-state) or matrix (m-state) side of the inner mitochondrial membrane. In addition to its ADP:ATP antiporter activity, also involved in mitochondrial uncoupling and mitochondrial permeability transition pore (mPTP) activity. Plays a role in mitochondrial uncoupling by acting as a proton transporter: proton transport uncouples the proton flows via the electron transport chain and ATP synthase to reduce the efficiency of ATP production and cause mitochondrial thermogenesis. Proton transporter activity is inhibited by ADP:ATP antiporter activity, suggesting that SLC25A5/ANT2 acts as a master regulator of mitochondrial energy output by maintaining a delicate balance between ATP production (ADP:ATP antiporter activity) and thermogenesis (proton transporter activity). Proton transporter activity requires free fatty acids as cofactor, but does not transport it. Probably mediates mitochondrial uncoupling in tissues that do not express UCP1. Also plays a key role in mPTP opening, a non-specific pore that enables free passage of the mitochondrial membranes to solutes of up to 1.5 kDa, and which contributes to cell death. It is however unclear if SLC25A5/ANT2 constitutes a pore-forming component of mPTP or regulates it. Acts as a regulator of mitophagy independently of ADP:ATP antiporter activity: promotes mitophagy via interaction with TIMM44, leading to inhibit the presequence translocase TIMM23, thereby promoting stabilization of PINK1. As part of the mitotic spindle-associated MMXD complex it may play a role in chromosome segregation. The polypeptide is ADP/ATP translocase 2 (Bos taurus (Bovine)).